Reading from the N-terminus, the 391-residue chain is Lipid-A-disaccharide synthase (391 aa).

This sequence belongs to the LpxB family.

It catalyses the reaction a lipid X + a UDP-2-N,3-O-bis[(3R)-3-hydroxyacyl]-alpha-D-glucosamine = a lipid A disaccharide + UDP + H(+). The protein operates within bacterial outer membrane biogenesis; LPS lipid A biosynthesis. Functionally, condensation of UDP-2,3-diacylglucosamine and 2,3-diacylglucosamine-1-phosphate to form lipid A disaccharide, a precursor of lipid A, a phosphorylated glycolipid that anchors the lipopolysaccharide to the outer membrane of the cell. The chain is Lipid-A-disaccharide synthase from Rickettsia akari (strain Hartford).